The primary structure comprises 61 residues: Overexpressed in colon carcinoma 1 protein homolog (61 aa).

Positions 1–13 (MGCGNSTAASTTP) are enriched in polar residues. The segment at 1 to 61 (MGCGNSTAAS…AGQTASTHKE (61 aa)) is disordered. A compositionally biased stretch (basic and acidic residues) spans 18–34 (SAKDVQDDSSMDEEKRR). The segment covering 48-61 (TNETAGQTASTHKE) has biased composition (polar residues).

The protein belongs to the OCC1 family.

The chain is Overexpressed in colon carcinoma 1 protein homolog (si:dkey-261e22.4) from Danio rerio (Zebrafish).